Consider the following 140-residue polypeptide: ATP synthase epsilon chain (140 aa).

The protein belongs to the ATPase epsilon chain family. As to quaternary structure, F-type ATPases have 2 components, CF(1) - the catalytic core - and CF(0) - the membrane proton channel. CF(1) has five subunits: alpha(3), beta(3), gamma(1), delta(1), epsilon(1). CF(0) has three main subunits: a, b and c.

Its subcellular location is the cell inner membrane. Functionally, produces ATP from ADP in the presence of a proton gradient across the membrane. This Legionella pneumophila (strain Paris) protein is ATP synthase epsilon chain.